Here is a 342-residue protein sequence, read N- to C-terminus: Ribosomal RNA small subunit methyltransferase C (342 aa).

It belongs to the methyltransferase superfamily. RsmC family. In terms of assembly, monomer.

The protein localises to the cytoplasm. The enzyme catalyses guanosine(1207) in 16S rRNA + S-adenosyl-L-methionine = N(2)-methylguanosine(1207) in 16S rRNA + S-adenosyl-L-homocysteine + H(+). In terms of biological role, specifically methylates the guanine in position 1207 of 16S rRNA in the 30S particle. This chain is Ribosomal RNA small subunit methyltransferase C, found in Shewanella loihica (strain ATCC BAA-1088 / PV-4).